The following is a 265-amino-acid chain: Cell division protein DivIB (265 aa).

Over Met1–Arg30 the chain is Cytoplasmic. The chain crosses the membrane as a helical span at residues Leu31–Pro51. At Leu52–Ser265 the chain is on the extracellular side. The region spanning Ser53 to Tyr121 is the POTRA domain.

This sequence belongs to the FtsQ/DivIB family. DivIB subfamily.

Its subcellular location is the cell membrane. Functionally, cell division protein that may be involved in stabilizing or promoting the assembly of the division complex. This is Cell division protein DivIB from Bacillus anthracis.